The primary structure comprises 227 residues: Phosphoribosylformylglycinamidine synthase subunit PurQ (227 aa).

In terms of domain architecture, Glutamine amidotransferase type-1 spans 3–227 (SSVITFPGSN…FFQNLINNLK (225 aa)). The active-site Nucleophile is the cysteine 85. Catalysis depends on residues histidine 201 and glutamate 203.

In terms of assembly, part of the FGAM synthase complex composed of 1 PurL, 1 PurQ and 2 PurS subunits.

The protein resides in the cytoplasm. The catalysed reaction is N(2)-formyl-N(1)-(5-phospho-beta-D-ribosyl)glycinamide + L-glutamine + ATP + H2O = 2-formamido-N(1)-(5-O-phospho-beta-D-ribosyl)acetamidine + L-glutamate + ADP + phosphate + H(+). The enzyme catalyses L-glutamine + H2O = L-glutamate + NH4(+). It participates in purine metabolism; IMP biosynthesis via de novo pathway; 5-amino-1-(5-phospho-D-ribosyl)imidazole from N(2)-formyl-N(1)-(5-phospho-D-ribosyl)glycinamide: step 1/2. Its function is as follows. Part of the phosphoribosylformylglycinamidine synthase complex involved in the purines biosynthetic pathway. Catalyzes the ATP-dependent conversion of formylglycinamide ribonucleotide (FGAR) and glutamine to yield formylglycinamidine ribonucleotide (FGAM) and glutamate. The FGAM synthase complex is composed of three subunits. PurQ produces an ammonia molecule by converting glutamine to glutamate. PurL transfers the ammonia molecule to FGAR to form FGAM in an ATP-dependent manner. PurS interacts with PurQ and PurL and is thought to assist in the transfer of the ammonia molecule from PurQ to PurL. This chain is Phosphoribosylformylglycinamidine synthase subunit PurQ, found in Pelagibacter ubique (strain HTCC1062).